A 428-amino-acid chain; its full sequence is Autophagy-related protein 14 (428 aa).

Residues 82-143 (QEAIDRTAEI…RKKQLDKVKD (62 aa)) adopt a coiled-coil conformation.

This sequence belongs to the ATG14 family. As to quaternary structure, component of the autophagy-specific VPS34 PI3-kinase complex I.

The protein resides in the preautophagosomal structure membrane. The protein localises to the vacuole membrane. Required for cytoplasm to vacuole transport (Cvt) and autophagy as a part of the autophagy-specific VPS34 PI3-kinase complex I. This complex is essential to recruit the ATG8-phosphatidylinositol conjugate and the ATG12-ATG5 conjugate to the pre-autophagosomal structure. ATG14 mediates the specific binding of the VPS34 PI3-kinase complex I to the preautophagosomal structure (PAS). Plays a crucial role in hyphal development, conidiogenesis and pathogenicity. Also required for glycogen mobilization, quantity of lipid bodies, and the turgor pressure of appressoria. This Pyricularia oryzae (strain 70-15 / ATCC MYA-4617 / FGSC 8958) (Rice blast fungus) protein is Autophagy-related protein 14.